Here is a 521-residue protein sequence, read N- to C-terminus: MAENPGLENHRIKSFKNKGRDVETMRRHRNEVTVELRKNKRDEHLLKKRNVPQEESLEDSDVDADFKAQNVTLEAILQNATSDNPVVQLSAVQAARKLLSSDRNPPIDDLIKSGILPILVKCLERDDNPSLQFEAAWALTNIASGTSAQTQAVVQSNAVPLFLRLLHSPHQNVCEQAVWALGNIIGDGPQCRDYVISLGVVKPLLSFINPSIPITFLRNVTWVIVNLCRNKDPPPPMETVQEILPALCVLIYHTDINILVDTVWALSYLTDGGNEQIQMVIDSGVVPFLVPLLSHQEVKVQTAALRAVGNIVTGTDEQTQVVLNCDVLSHFPNLLSHPKEKINKEAVWFLSNITAGNQQQVQAVIDAGLIPMIIHQLAKGDFGTQKEAAWAISNLTISGRKDQVEYLVQQNVIPPFCNLLSVKDSQVVQVVLDGLKNILIMAGDEASTIAEIIEECGGLEKIEVLQQHENEDIYKLAFEIIDQYFSGDDIDEDPSLIPEATQGGTYNFDPTANLQTKEFNF.

The tract at residues 1 to 29 (MAENPGLENHRIKSFKNKGRDVETMRRHR) is disordered. A2 is subject to N-acetylalanine. Positions 2-58 (AENPGLENHRIKSFKNKGRDVETMRRHRNEVTVELRKNKRDEHLLKKRNVPQEESLE) constitute an IBB domain. A compositionally biased stretch (basic and acidic residues) spans 18 to 29 (KGRDVETMRRHR). A Nuclear localization signal motif is present at residues 43–52 (EHLLKKRNVP). Phosphoserine occurs at positions 56 and 60. Residues 66-106 (FKAQNVTLEAILQNATSDNPVVQLSAVQAARKLLSSDRNPP) form an ARM 1; truncated repeat. 8 ARM repeats span residues 107–149 (IDDL…TSAQ), 150–194 (TQAV…CRDY), 195–233 (VISLGVVKPLLSFINPSIPITFLRNVTWVIVNLCRNKDP), 234–278 (PPPM…EQIQ), 279–318 (MVIDSGVVPFLVPLLSHQEVKVQTAALRAVGNIVTGTDEQ), 319–360 (TQVV…NQQQ), 361–400 (VQAVIDAGLIPMIIHQLAKGDFGTQKEAAWAISNLTISGR), and 401–443 (KDQV…IMAG). Positions 137-229 (WALTNIASGT…VTWVIVNLCR (93 aa)) are NLS binding site (major). Residues 306–394 (RAVGNIVTGT…QKEAAWAISN (89 aa)) form an NLS binding site (minor) region. The ARM 10; atypical repeat unit spans residues 447–485 (STIAEIIEECGGLEKIEVLQQHENEDIYKLAFEIIDQYF). Y484 carries the phosphotyrosine modification.

It belongs to the importin alpha family. As to quaternary structure, forms a complex with importin subunit beta-1. Interacts with DDX21. Interacts with NCBP1, NCBP2/CBP20 and NCBP3. Interacts with RCC1. Interacts with ZC3H11A. In terms of tissue distribution, detected more or less in all tissues examined (Ehrlich ascites tumor cells, testis, kidney, spleen, liver, heart, lung, thymus, skeletal muscle, cerebellum and brain (without cerebellum)).

It is found in the cytoplasm. The protein localises to the nucleus. Functionally, functions in nuclear protein import as an adapter protein for nuclear receptor KPNB1. Binds specifically and directly to substrates containing either a simple or bipartite NLS motif. Docking of the importin/substrate complex to the nuclear pore complex (NPC) is mediated by KPNB1 through binding to nucleoporin FxFG repeats and the complex is subsequently translocated through the pore by an energy requiring, Ran-dependent mechanism. At the nucleoplasmic side of the NPC, Ran binds to importin-beta and the three components separate and importin-alpha and -beta are re-exported from the nucleus to the cytoplasm where GTP hydrolysis releases Ran from importin. The directionality of nuclear import is thought to be conferred by an asymmetric distribution of the GTP- and GDP-bound forms of Ran between the cytoplasm and nucleus. In vitro, mediates the nuclear import of human cytomegalovirus UL84 by recognizing a non-classical NLS. This Mus musculus (Mouse) protein is Importin subunit alpha-4 (Kpna3).